The sequence spans 100 residues: DSELAGPRGARGPHGLSGPHGLSGLXGPXGYTGPIGMXGLTGLRREESEKVWLESKDGQELELVSSGSAQEELELVSSGSAQVSFASYLGASQPLPSELW.

Residues 1 to 40 (DSELAGPRGARGPHGLSGPHGLSGLXGPXGYTGPIGMXGL) are disordered. The span at 13–29 (PHGLSGPHGLSGLXGPX) shows a compositional bias: low complexity.

As to expression, detected at high levels in the urine of pregnant females (at protein level) and at far lower levels in the urine of nonpregnant females.

The sequence is that of Pregnancy-associated protein bPAP from Bos taurus (Bovine).